The following is a 325-amino-acid chain: Cln5-like protein 2 (325 aa).

Positions 1–19 (MNKLIFIIICLGIVDKTIS) are cleaved as a signal peptide. 8 N-linked (GlcNAc...) asparagine glycosylation sites follow: Asn-88, Asn-117, Asn-133, Asn-163, Asn-182, Asn-189, Asn-238, and Asn-262.

The protein belongs to the CLN5 family.

This chain is Cln5-like protein 2 (cln5lb), found in Dictyostelium discoideum (Social amoeba).